Consider the following 732-residue polypeptide: Small conductance calcium-activated potassium channel protein 3 (732 aa).

The span at 1 to 11 shows a compositional bias: basic and acidic residues; sequence MDTSGHFHDSG. 2 disordered regions span residues 1–82 and 103–162; these read MDTS…QQAP and HSSP…ASPL. The segment covering 35 to 59 has biased composition (pro residues); the sequence is QPPPPSAPPAVPQQPPGPLLQPQPP. A compositionally biased stretch (low complexity) spans 60–82; the sequence is QLQQQQQQQQQQQQQQQQQQQAP. Residues 113–133 are compositionally biased toward polar residues; it reads NSANSTAILHPSSRQGSQLNL. A compositionally biased stretch (low complexity) spans 139–148; the sequence is GHSPSSTATS. Ser-168 is subject to Phosphoserine. The span at 241–257 shows a compositional bias: polar residues; it reads THNHQHAGTTAGSTTFP. The disordered stretch occupies residues 241–260; that stretch reads THNHQHAGTTAGSTTFPKAN. The chain crosses the membrane as a helical span at residues 289–309; that stretch reads LIFGMFGIVVMVIETELSWGL. A helical membrane pass occupies residues 316 to 336; it reads FSLALKCLISLSTIILLGLII. A helical transmembrane segment spans residues 367–387; it reads ISLEMLVCAIHPIPGEYKFFW. The chain crosses the membrane as a helical span at residues 406 to 426; sequence IILSIPMFLRLYLIARVMLLH. Residues 455–475 form a helical membrane-spanning segment; sequence LMTICPGTVLLVFSISLWIIA. Positions 495–515 form an intramembrane region, pore-forming; it reads FLGAMWLISITFLSIGYGDMV. Residues 524–544 traverse the membrane as a helical segment; sequence VCLLTGIMGAGCTALVVAVVA. The segment at 562 to 638 is calmodulin-binding; sequence DTQLTKRIKN…LVDLSKMQNV (77 aa). Positions 643–670 form a coiled coil; the sequence is ITELNDRSEDLEKQIGSLESKLEHLTAS. A disordered region spans residues 704 to 732; sequence GTSHAPPSDSPIGISSTSFPTPYTSSSSC. A compositionally biased stretch (low complexity) spans 718–732; the sequence is SSTSFPTPYTSSSSC.

The protein belongs to the potassium channel KCNN family. KCa2.3/KCNN3 subfamily. As to quaternary structure, homodimer. Heteromultimer with KCNN2 or KCNN1; this modulates plasma membrane expression and consequently the small conductance calcium-activated potassium channel activity. The complex is composed of 4 channel subunits each of which binds to a calmodulin subunit which regulates the channel activity through calcium-binding. Interacts with CALM1.

The protein localises to the cell membrane. It localises to the cytoplasm. Its subcellular location is the myofibril. It is found in the sarcomere. The protein resides in the z line. The enzyme catalyses K(+)(in) = K(+)(out). Its activity is regulated as follows. Inhibited by bee venom neurotoxin apamin. Functionally, small conductance calcium-activated potassium channel that mediates the voltage-independent transmembrane transfer of potassium across the cell membrane through a constitutive interaction with calmodulin which binds the intracellular calcium allowing its opening. The current is characterized by a voltage-independent activation, an intracellular calcium concentration increase-dependent activation and a single-channel conductance of 10 picosiemens. Also presents an inwardly rectifying current, thus reducing its already small outward conductance of potassium ions, which is particularly the case when the membrane potential displays positive values, above + 20 mV. Activation is followed by membrane hyperpolarization. Thought to regulate neuronal excitability by contributing to the slow component of synaptic afterhyperpolarization. The protein is Small conductance calcium-activated potassium channel protein 3 of Rattus norvegicus (Rat).